A 494-amino-acid chain; its full sequence is DEAD-box ATP-dependent RNA helicase 20 (494 aa).

Positions 1-20 (MSRFDGRAADPGSYRDRRSE) are enriched in basic and acidic residues. The interval 1–39 (MSRFDGRAADPGSYRDRRSEGAFGGGTRAFAPTSKADSA) is disordered. The segment covering 29 to 39 (AFAPTSKADSA) has biased composition (low complexity). The Q motif motif lies at 91–119 (REFRDVGFPEYVLQEITKAGFVEPTPIQS). Residues 122–297 (WPMALRGRDL…RNFLFDPYKV (176 aa)) enclose the Helicase ATP-binding domain. 135-142 (AETGSGKT) is a binding site for ATP. The short motif at 245–248 (DEAD) is the DEAD box element. The Helicase C-terminal domain occupies 325–470 (KLVNLLEDIM…KVSPELANMG (146 aa)). The disordered stretch occupies residues 465 to 494 (ELANMGRGAPPPSSGHRDRYRGYGGGRSWS).

Belongs to the DEAD box helicase family. DDX5/DBP2 subfamily.

The protein resides in the nucleus. The catalysed reaction is ATP + H2O = ADP + phosphate + H(+). Functionally, ATP-dependent RNA helicase involved nonsense-mediated mRNA decay and ribosome biogenesis through rRNA processing. This is DEAD-box ATP-dependent RNA helicase 20 from Oryza sativa subsp. japonica (Rice).